Consider the following 122-residue polypeptide: Large ribosomal subunit protein uL14 (122 aa).

The protein belongs to the universal ribosomal protein uL14 family. As to quaternary structure, part of the 50S ribosomal subunit. Forms a cluster with proteins L3 and L19. In the 70S ribosome, L14 and L19 interact and together make contacts with the 16S rRNA in bridges B5 and B8.

Functionally, binds to 23S rRNA. Forms part of two intersubunit bridges in the 70S ribosome. This chain is Large ribosomal subunit protein uL14, found in Geobacillus sp. (strain WCH70).